The sequence spans 254 residues: UPF0246 protein CPR_2119 (254 aa).

Belongs to the UPF0246 family.

The polypeptide is UPF0246 protein CPR_2119 (Clostridium perfringens (strain SM101 / Type A)).